Consider the following 366-residue polypeptide: DNA double-strand break repair protein Mre11 (366 aa).

Residues Asp8, His10, Asp49, and Asn84 each coordinate Mn(2+). His85 (proton donor) is an active-site residue. Mn(2+) is bound by residues His158, His186, and His188.

The protein belongs to the MRE11/RAD32 family. Homodimer. Forms a heterotetramer composed of two Mre11 subunits and two Rad50 subunits. Mn(2+) is required as a cofactor.

With respect to regulation, nuclease activity is regulated by Rad50. Its function is as follows. Part of the Rad50/Mre11 complex, which is involved in the early steps of DNA double-strand break (DSB) repair. The complex may facilitate opening of the processed DNA ends to aid in the recruitment of HerA and NurA. Mre11 binds to DSB ends and has both double-stranded 3'-5' exonuclease activity and single-stranded endonuclease activity. In Methanocaldococcus jannaschii (strain ATCC 43067 / DSM 2661 / JAL-1 / JCM 10045 / NBRC 100440) (Methanococcus jannaschii), this protein is DNA double-strand break repair protein Mre11.